The chain runs to 283 residues: MSRSPVIVRTLPALRRALDTLRARNASLALVPTMGALHDGHVSLVRLAKRRASKVAVSIFINPAQFAPNEDFAAYPRTWKADLARLTAEKVDLIWNPDAKTMYPAGFASKILTEGPALAGLEDRFRPQFFGGVTTVVGKLFAQVRPDLALFGEKDFQQLRVVARMARDLDLGVKVVGAQIVRERDGLAMSSRNRYLSPEHRESATALCRGLKEAAKRIRAGEAIEAALAGSAALITAAGFKIDYLEARHAETLAPVASRKDGPIRLLVAATIGTTRLIDNVAV.

34–41 contributes to the ATP binding site; sequence MGALHDGH. The Proton donor role is filled by His41. Residue Gln65 coordinates (R)-pantoate. Residue Gln65 coordinates beta-alanine. An ATP-binding site is contributed by 152–155; it reads GEKD. Residue Gln158 coordinates (R)-pantoate. Residues Val181 and 189 to 192 contribute to the ATP site; that span reads MSSR.

This sequence belongs to the pantothenate synthetase family. In terms of assembly, homodimer.

It localises to the cytoplasm. It carries out the reaction (R)-pantoate + beta-alanine + ATP = (R)-pantothenate + AMP + diphosphate + H(+). Its pathway is cofactor biosynthesis; (R)-pantothenate biosynthesis; (R)-pantothenate from (R)-pantoate and beta-alanine: step 1/1. Functionally, catalyzes the condensation of pantoate with beta-alanine in an ATP-dependent reaction via a pantoyl-adenylate intermediate. The protein is Pantothenate synthetase of Rhodopseudomonas palustris (strain BisB18).